Reading from the N-terminus, the 448-residue chain is Portal protein (448 aa).

The tract at residues 1–25 (MAKRGRKPKELVPGPGSIDPSDVPK) is disordered.

It belongs to the P23virus portal protein family. As to quaternary structure, homododecamer. Interacts with the capsid protein. Interacts with the terminase large subunit; this interaction allows the packaging of viral DNA.

It localises to the virion. Functionally, forms the portal vertex of the capsid. This portal plays critical roles in head assembly, genome packaging, neck/tail attachment, and genome ejection. The portal protein multimerizes as a single ring-shaped homododecamer arranged around a central channel. Forms the portal vertex of the capsid. This portal plays critical roles in head assembly, genome packaging, neck/tail attachment, and genome ejection. This Thermus thermophilus (Thermus thermophilus phage P23-45) protein is Portal protein.